A 351-amino-acid polypeptide reads, in one-letter code: DNA integrity scanning protein DisA (351 aa).

Positions 4 to 142 (RSGFWQVLQQ…GPMKYILRDF (139 aa)) constitute a DAC domain. ATP-binding positions include Gly-71, Leu-89, and 102 to 106 (TRHRT).

This sequence belongs to the DisA family. Homooctamer. The cofactor is Mg(2+).

The catalysed reaction is 2 ATP = 3',3'-c-di-AMP + 2 diphosphate. Functionally, participates in a DNA-damage check-point that is active prior to asymmetric division when DNA is damaged. DisA forms globular foci that rapidly scan along the chromosomes during sporulation, searching for lesions. When a lesion is present, DisA pauses at the lesion site. This triggers a cellular response that culminates in a temporary block in sporulation initiation. Its function is as follows. Also has diadenylate cyclase activity, catalyzing the condensation of 2 ATP molecules into cyclic di-AMP (c-di-AMP). c-di-AMP acts as a signaling molecule that couples DNA integrity with progression of sporulation. The rise in c-di-AMP level generated by DisA while scanning the chromosome, operates as a positive signal that advances sporulation; upon encountering a lesion, the DisA focus arrests at the damaged site and halts c-di-AMP synthesis. The protein is DNA integrity scanning protein DisA of Symbiobacterium thermophilum (strain DSM 24528 / JCM 14929 / IAM 14863 / T).